A 292-amino-acid polypeptide reads, in one-letter code: Ribosomal protein L11 methyltransferase (292 aa).

S-adenosyl-L-methionine is bound by residues threonine 144, glycine 165, aspartate 187, and asparagine 229.

The protein belongs to the methyltransferase superfamily. PrmA family.

The protein resides in the cytoplasm. The catalysed reaction is L-lysyl-[protein] + 3 S-adenosyl-L-methionine = N(6),N(6),N(6)-trimethyl-L-lysyl-[protein] + 3 S-adenosyl-L-homocysteine + 3 H(+). Its function is as follows. Methylates ribosomal protein L11. The protein is Ribosomal protein L11 methyltransferase of Pseudomonas fluorescens (strain SBW25).